We begin with the raw amino-acid sequence, 260 residues long: (R)-2-hydroxyglutaryl-CoA dehydratase activating ATPase (260 aa).

12-16 (STASK) serves as a coordination point for ATP. 2 residues coordinate [4Fe-4S] cluster: cysteine 127 and cysteine 166. Positions 220 and 243 each coordinate ATP.

Belongs to the HgdC family. As to quaternary structure, homodimer. [4Fe-4S] cluster is required as a cofactor. Requires Mg(2+) as cofactor.

It carries out the reaction ATP + H2O = ADP + phosphate + H(+). It functions in the pathway amino-acid degradation; L-glutamate degradation via hydroxyglutarate pathway; crotonoyl-CoA from L-glutamate: step 4/5. With respect to regulation, inactivated by exposure to air within less than 15 minutes. Functionally, involved in the fermentation of L-glutamate via the hydroxyglutarate pathway. HgdC (CompA) has a very low ATPase activity, whose the role is to activate dehydratase HgdA-HgdB complex and then maintain an appropriate redox state via an ATP-dependent electron transfer. The dehydratase requires only catalytic amounts of ATP and substoichiometric amounts of HgdC (CompA) to be functional. The chain is (R)-2-hydroxyglutaryl-CoA dehydratase activating ATPase from Acidaminococcus fermentans (strain ATCC 25085 / DSM 20731 / CCUG 9996 / CIP 106432 / VR4).